The sequence spans 803 residues: Translation initiation factor IF-2 (803 aa).

Disordered regions lie at residues 95–125 (PVVE…EKAE) and 138–209 (EVKE…KLEQ). The segment covering 111 to 121 (VPLTSDTTNLN) has biased composition (polar residues). The span at 138 to 155 (EVKEEAKKTPSEKKETPK) shows a compositional bias: basic and acidic residues. Positions 156 to 167 (KGPRKETRRSRK) are enriched in basic residues. Residues 168–188 (PDKEDKWEREELHMTKLVEER) are compositionally biased toward basic and acidic residues. The tr-type G domain maps to 302–471 (PRAPVVTIMG…LLQAEVLELK (170 aa)). The interval 311–318 (GHVDHGKT) is G1. 311–318 (GHVDHGKT) is a GTP binding site. The tract at residues 336-340 (GITQH) is G2. The segment at 357–360 (DTPG) is G3. GTP is bound by residues 357–361 (DTPGH) and 411–414 (NKID). The segment at 411-414 (NKID) is G4. The segment at 447–449 (SAK) is G5.

This sequence belongs to the TRAFAC class translation factor GTPase superfamily. Classic translation factor GTPase family. IF-2 subfamily.

Its subcellular location is the cytoplasm. One of the essential components for the initiation of protein synthesis. Protects formylmethionyl-tRNA from spontaneous hydrolysis and promotes its binding to the 30S ribosomal subunits. Also involved in the hydrolysis of GTP during the formation of the 70S ribosomal complex. In Coxiella burnetii (strain CbuG_Q212) (Coxiella burnetii (strain Q212)), this protein is Translation initiation factor IF-2.